The sequence spans 363 residues: Probable butyrate kinase (363 aa).

Belongs to the acetokinase family.

The protein localises to the cytoplasm. The enzyme catalyses butanoate + ATP = butanoyl phosphate + ADP. In Maridesulfovibrio salexigens (strain ATCC 14822 / DSM 2638 / NCIMB 8403 / VKM B-1763) (Desulfovibrio salexigens), this protein is Probable butyrate kinase.